A 392-amino-acid chain; its full sequence is Probable glycerol-3-phosphate dehydrogenase 2 (392 aa).

NAD(+) is bound by residues 42 to 47, phenylalanine 130, lysine 153, and alanine 196; that span reads GSGNWG. Residue lysine 153 coordinates substrate. Lysine 248 serves as the catalytic Proton acceptor. NAD(+)-binding residues include arginine 312 and glutamine 341. 312-313 contacts substrate; the sequence is RN.

It belongs to the NAD-dependent glycerol-3-phosphate dehydrogenase family. Homodimer.

It localises to the cytoplasm. It catalyses the reaction sn-glycerol 3-phosphate + NAD(+) = dihydroxyacetone phosphate + NADH + H(+). The polypeptide is Probable glycerol-3-phosphate dehydrogenase 2 (gpdh-2) (Caenorhabditis elegans).